We begin with the raw amino-acid sequence, 176 residues long: 2-C-methyl-D-erythritol 2,4-cyclodiphosphate synthase (176 aa).

Asp-22 and His-24 together coordinate a divalent metal cation. 4-CDP-2-C-methyl-D-erythritol 2-phosphate is bound by residues Asp-22–His-24 and His-48–Ser-49. His-56 contributes to the a divalent metal cation binding site. 4-CDP-2-C-methyl-D-erythritol 2-phosphate-binding positions include Asp-70–Gly-72, Thr-146–Glu-149, Phe-153, and Arg-156.

The protein belongs to the IspF family. As to quaternary structure, homotrimer. The cofactor is a divalent metal cation.

The enzyme catalyses 4-CDP-2-C-methyl-D-erythritol 2-phosphate = 2-C-methyl-D-erythritol 2,4-cyclic diphosphate + CMP. The protein operates within isoprenoid biosynthesis; isopentenyl diphosphate biosynthesis via DXP pathway; isopentenyl diphosphate from 1-deoxy-D-xylulose 5-phosphate: step 4/6. Involved in the biosynthesis of isopentenyl diphosphate (IPP) and dimethylallyl diphosphate (DMAPP), two major building blocks of isoprenoid compounds. Catalyzes the conversion of 4-diphosphocytidyl-2-C-methyl-D-erythritol 2-phosphate (CDP-ME2P) to 2-C-methyl-D-erythritol 2,4-cyclodiphosphate (ME-CPP) with a corresponding release of cytidine 5-monophosphate (CMP). This is 2-C-methyl-D-erythritol 2,4-cyclodiphosphate synthase from Xylella fastidiosa (strain 9a5c).